Reading from the N-terminus, the 32-residue chain is MSDIN-like toxin proprotein 3 (32 aa).

Positions 1–10 (MSDINATRLP) are excised as a propeptide. The segment at residues 11 to 17 (SFFFPIP) is a cross-link (cyclopeptide (Ser-Pro)). The propeptide occupies 18-32 (CISDDIEMVLTRGER).

Belongs to the MSDIN fungal toxin family. Post-translationally, processed by the macrocyclase-peptidase enzyme POPB to yield a toxic cyclic heptapeptide. POPB first removes 10 residues from the N-terminus. Conformational trapping of the remaining peptide forces the enzyme to release this intermediate rather than proceed to macrocyclization. The enzyme rebinds the remaining peptide in a different conformation and catalyzes macrocyclization of the N-terminal 8 residues.

Its function is as follows. Probable toxin that belongs to the MSDIN-like toxin family responsible for a large number of food poisoning cases and deaths. The sequence is that of MSDIN-like toxin proprotein 3 from Amanita phalloides (Death cap).